Consider the following 233-residue polypeptide: Small ribosomal subunit protein uS2 (233 aa).

This sequence belongs to the universal ribosomal protein uS2 family.

This is Small ribosomal subunit protein uS2 from Clostridium botulinum (strain Alaska E43 / Type E3).